We begin with the raw amino-acid sequence, 192 residues long: A-type ATP synthase subunit E (192 aa).

This sequence belongs to the V-ATPase E subunit family. Has multiple subunits with at least A(3), B(3), C, D, E, F, H, I and proteolipid K(x).

It is found in the cell membrane. Functionally, component of the A-type ATP synthase that produces ATP from ADP in the presence of a proton gradient across the membrane. This is A-type ATP synthase subunit E from Methanoculleus marisnigri (strain ATCC 35101 / DSM 1498 / JR1).